Here is a 417-residue protein sequence, read N- to C-terminus: D-amino acid dehydrogenase (417 aa).

3–17 (AVVLGSGVVGLMSAW) is a binding site for FAD.

The protein belongs to the DadA oxidoreductase family. The cofactor is FAD.

The catalysed reaction is a D-alpha-amino acid + A + H2O = a 2-oxocarboxylate + AH2 + NH4(+). Functionally, oxidative deamination of D-amino acids. The protein is D-amino acid dehydrogenase of Vibrio vulnificus (strain YJ016).